We begin with the raw amino-acid sequence, 422 residues long: Histidine--tRNA ligase (422 aa).

This sequence belongs to the class-II aminoacyl-tRNA synthetase family. Homodimer.

The protein localises to the cytoplasm. The enzyme catalyses tRNA(His) + L-histidine + ATP = L-histidyl-tRNA(His) + AMP + diphosphate + H(+). This Nocardia farcinica (strain IFM 10152) protein is Histidine--tRNA ligase.